A 185-amino-acid chain; its full sequence is Calcium-binding protein CML37 (185 aa).

A compositionally biased stretch (polar residues) spans 1–12 (MTLAKNQKSSLS). Residues 1-45 (MTLAKNQKSSLSRLYKKVSSKRSESSRNLEDESRTSSNSSGSSSL) form a disordered region. The segment covering 21–34 (KRSESSRNLEDESR) has biased composition (basic and acidic residues). Residues 35-44 (TSSNSSGSSS) show a composition bias toward low complexity. EF-hand domains are found at residues 45 to 80 (LNVN…LGGA), 81 to 116 (LSSR…EDGS), 119 to 154 (ERRK…LGES), and 155 to 185 (CTVD…LMMR). The Ca(2+) site is built by Asp-58, Asn-60, Asp-62, Lys-64, Glu-69, Asp-94, Asp-96, Asp-98, and Glu-105. Ca(2+) is bound by residues Asp-168, Asn-170, Asp-172, and Glu-179.

Binds to ABCG36. As to expression, expressed in cotyledons, stipule, young leaves and at the hypocotyl-root junction. In mature root, expressed in the stele, cortex, emerging lateral root, root tip and root cap. In mature plant, expressed at the base of cauline and floral branches, and in rosette and cauline leaves. Expressed from stage 9 to 14 of flower development in anthers. At stage 15, expressed in carpel, sepals, petals and pollen until dehiscence. Expressed in developing seeds and young siliques.

Functionally, potential calcium sensor that binds calcium in vitro. The sequence is that of Calcium-binding protein CML37 from Arabidopsis thaliana (Mouse-ear cress).